The primary structure comprises 719 residues: DNA ligase (719 aa).

NAD(+)-binding positions include 42-46, 91-92, and Glu125; these read DAEYD and SL. Lys127 serves as the catalytic N6-AMP-lysine intermediate. The NAD(+) site is built by Arg148, Glu184, Lys300, and Lys324. Cys429, Cys432, Cys447, and Cys453 together coordinate Zn(2+). Positions 638–719 constitute a BRCT domain; that stretch reads TASSPIAEKI…WMRLIKGHNI (82 aa).

Belongs to the NAD-dependent DNA ligase family. LigA subfamily. It depends on Mg(2+) as a cofactor. The cofactor is Mn(2+).

It catalyses the reaction NAD(+) + (deoxyribonucleotide)n-3'-hydroxyl + 5'-phospho-(deoxyribonucleotide)m = (deoxyribonucleotide)n+m + AMP + beta-nicotinamide D-nucleotide.. Its function is as follows. DNA ligase that catalyzes the formation of phosphodiester linkages between 5'-phosphoryl and 3'-hydroxyl groups in double-stranded DNA using NAD as a coenzyme and as the energy source for the reaction. It is essential for DNA replication and repair of damaged DNA. This chain is DNA ligase, found in Bartonella tribocorum (strain CIP 105476 / IBS 506).